A 355-amino-acid chain; its full sequence is Probable F-box protein At5g36000 (355 aa).

Over residues 1–14 (MNTRSGDAEGDIRG) the composition is skewed to basic and acidic residues. A disordered region spans residues 1-44 (MNTRSGDAEGDIRGKMIAPVRDGNGGQKRKLVQSNDIQRDEDGG). In terms of domain architecture, F-box; degenerate spans 78–124 (QSRFSWYEQDIWTYITRFLDGKSLVKLGATNKWFYKIAMEDTVWRFA).

The sequence is that of Probable F-box protein At5g36000 from Arabidopsis thaliana (Mouse-ear cress).